Reading from the N-terminus, the 378-residue chain is UDP-N-acetylglucosamine 2-epimerase (378 aa).

H214 is a catalytic residue.

It belongs to the UDP-N-acetylglucosamine 2-epimerase family.

It catalyses the reaction UDP-N-acetyl-alpha-D-glucosamine = UDP-N-acetyl-alpha-D-mannosamine. It participates in bacterial outer membrane biogenesis; LPS O-antigen biosynthesis. This chain is UDP-N-acetylglucosamine 2-epimerase (rfbC), found in Salmonella borreze.